The chain runs to 435 residues: MEMEKEFEQIDKSGSWAAIYQDIRHEASDFPCRVAKLPKNKNRNRYRDVSPFDHSRIKLHQEDNDYINASLIKMEEAQRSYILTQGPLPNTCGHFWEMVWEQKSRGVVMLNRVMEKGSLKCAQYWPQKEEKEMIFEDTNLKLTLISEDIKSYYTVRQLELENLTTQETREILHFHYTTWPDFGVPESPASFLNFLFKVRESGSLSPEHGPVVVHCSAGIGRSGTFCLADTCLLLMDKRKDPSSVDIKKVLLEMRKFRMGLIQTADQLRFSYLAVIEGAKFIMGDSSVQDQWKELSHEDLEPPPEHIPPPPRPPKRILEPHNGKCREFFPNHQWVKEETQEDKDCPIKEEKGSPLNAAPYGIESMSQDTEVRSRVVGGSLRGAQAASPAKGEPSLPEKDEDHALSYWKPFLVNMCVATVLTAGAYLCYRFLFNSNT.

Met1 bears the N-acetylmethionine mark. Positions 3-277 constitute a Tyrosine-protein phosphatase domain; it reads MEKEFEQIDK…RFSYLAVIEG (275 aa). Tyr20 is modified (phosphotyrosine). Position 50 is a phosphoserine; by PKB/AKT1, CLK1 and CLK2 (Ser50). Position 66 is a phosphotyrosine; by EGFR (Tyr66). Residues Asp181 and 215–221 contribute to the substrate site; that span reads CSAGIGR. The active-site Phosphocysteine intermediate is Cys215. A Cysteine persulfide; alternate modification is found at Cys215. Position 215 is a cysteine sulfenic acid (-SOH); alternate (Cys215). Cys215 is subject to Cysteine sulfinic acid (-SO2H); alternate. Cys215 carries the S-nitrosocysteine; in reversibly inhibited form modification. The n,N-(cysteine-1,S-diyl)serine (Cys-Ser); in inhibited form cross-link spans 215-216; that stretch reads CS. Residues Ser242 and Ser243 each carry the phosphoserine; by CLK1 and CLK2 modification. Residue Gln262 coordinates substrate. Basic and acidic residues predominate over residues 338–351; the sequence is TQEDKDCPIKEEKG. Residues 338–359 are disordered; the sequence is TQEDKDCPIKEEKGSPLNAAPY. 3 positions are modified to phosphoserine: Ser352, Ser363, and Ser365. Residue Thr368 is modified to Phosphothreonine. Ser378 is modified (phosphoserine; by PKC). Residues 378–398 are disordered; that stretch reads SLRGAQAASPAKGEPSLPEKD. Phosphoserine; by CDK1 is present on Ser386.

The protein belongs to the protein-tyrosine phosphatase family. Non-receptor class 1 subfamily. As to quaternary structure, interacts with EPHA3 (phosphorylated); dephosphorylates EPHA3 and may regulate its trafficking and function. Interacts with MET. Interacts with NCK1. Post-translationally, oxidized on Cys-215; the Cys-SOH formed in response to redox signaling reacts with the alpha-amido of the following residue to form a sulfenamide cross-link, triggering a conformational change that inhibits substrate binding and activity. The active site can be restored by reduction. In terms of processing, ser-50 is the major site of phosphorylation as compared to Ser-242 and Ser-243. Activated by phosphorylation at Ser-50. S-nitrosylation of Cys-215 inactivates the enzyme activity. Post-translationally, sulfhydration at Cys-215 following endoplasmic reticulum stress inactivates the enzyme activity, promoting EIF2AK3/PERK activity. As to expression, expressed in keratinocytes (at protein level).

The protein localises to the endoplasmic reticulum membrane. The catalysed reaction is O-phospho-L-tyrosyl-[protein] + H2O = L-tyrosyl-[protein] + phosphate. Functionally, tyrosine-protein phosphatase which acts as a regulator of endoplasmic reticulum unfolded protein response. Mediates dephosphorylation of EIF2AK3/PERK; inactivating the protein kinase activity of EIF2AK3/PERK. May play an important role in CKII- and p60c-src-induced signal transduction cascades. May regulate the EFNA5-EPHA3 signaling pathway which modulates cell reorganization and cell-cell repulsion. May also regulate the hepatocyte growth factor receptor signaling pathway through dephosphorylation of MET. In Homo sapiens (Human), this protein is Tyrosine-protein phosphatase non-receptor type 1 (PTPN1).